Reading from the N-terminus, the 104-residue chain is Gastrin (104 aa).

Residues 1 to 21 form the signal peptide; that stretch reads MQRLCAYVLIHVLALAACSEA. A propeptide spanning residues 22–58 is cleaved from the precursor; that stretch reads SWKPGFQLQDASSGPGANRGKEPHELDRLGPASHHRR. Positions 27-67 are disordered; sequence FQLQDASSGPGANRGKEPHELDRLGPASHHRRQLGLQGPPH. A compositionally biased stretch (basic and acidic residues) spans 40–49; the sequence is RGKEPHELDR. Q59 carries the post-translational modification Pyrrolidone carboxylic acid; in form big gastrin. Q76 carries the post-translational modification Pyrrolidone carboxylic acid; in form gastrin. Position 87 is a sulfotyrosine; partial (Y87). F92 carries the post-translational modification Phenylalanine amide. S96 carries the phosphoserine modification. Residues 96–104 constitute a propeptide that is removed on maturation; it reads SAEEGDQRP.

This sequence belongs to the gastrin/cholecystokinin family. In terms of processing, sulfation enhances proteolytic processing, and blocks peptide degradation. Levels of sulfation differ between proteolytically-cleaved gastrins. Thus, gastrin-6 is almost 73% sulfated, whereas the larger gastrins are less than 50% sulfated. Sulfation levels are also tissue-specific.

The protein localises to the secreted. In terms of biological role, gastrin stimulates the stomach mucosa to produce and secrete hydrochloric acid and the pancreas to secrete its digestive enzymes. It also stimulates smooth muscle contraction and increases blood circulation and water secretion in the stomach and intestine. The protein is Gastrin (GAST) of Sus scrofa (Pig).